A 317-amino-acid polypeptide reads, in one-letter code: tRNA dimethylallyltransferase (317 aa).

Glycine 14–serine 21 contributes to the ATP binding site. Threonine 16 to serine 21 contributes to the substrate binding site. Interaction with substrate tRNA regions lie at residues aspartate 39–leucine 42 and glutamine 163–arginine 167.

The protein belongs to the IPP transferase family. Monomer. The cofactor is Mg(2+).

It catalyses the reaction adenosine(37) in tRNA + dimethylallyl diphosphate = N(6)-dimethylallyladenosine(37) in tRNA + diphosphate. Catalyzes the transfer of a dimethylallyl group onto the adenine at position 37 in tRNAs that read codons beginning with uridine, leading to the formation of N6-(dimethylallyl)adenosine (i(6)A). The protein is tRNA dimethylallyltransferase of Xylella fastidiosa (strain 9a5c).